A 1436-amino-acid polypeptide reads, in one-letter code: Inositol hexakisphosphate and diphosphoinositol-pentakisphosphate kinase 1 (1436 aa).

Residue 64 to 65 (KK) participates in substrate binding. Residues Arg-145, Lys-198, His-205, Arg-224, 248–251 (EEFM), and 257–259 (DVK) each bind ATP. A substrate-binding site is contributed by 224 to 225 (RK). Substrate is bound by residues Lys-259 and Arg-273. Residues Ser-275, Asp-320, and 332 to 334 (DVN) each bind ATP. Residue 337–340 (SFVK) coordinates substrate. The polyphosphoinositide-binding domain stretch occupies residues 382-453 (PTTSGTMMEL…VLDITRLLLA (72 aa)). Residues 915-998 (GSAPAGCGFR…TSSSRPGGYR (84 aa)) are disordered. Phosphoserine is present on residues Ser-939, Ser-982, Ser-1032, Ser-1068, Ser-1140, and Ser-1147. 2 disordered regions span residues 1131-1191 (NHQA…GFSD) and 1389-1436 (SELS…EAIS). The segment covering 1163–1181 (SSGPSSTVSSAGPSSPTTV) has biased composition (low complexity). The segment covering 1405-1436 (LSEETELQAQEVSEEIDQESEVVDELPPEAIS) has biased composition (acidic residues).

This sequence belongs to the histidine acid phosphatase family. VIP1 subfamily.

Its subcellular location is the cytoplasm. It localises to the cytosol. It is found in the cell membrane. It carries out the reaction 1D-myo-inositol hexakisphosphate + ATP = 1-diphospho-1D-myo-inositol 2,3,4,5,6-pentakisphosphate + ADP. The enzyme catalyses 5-diphospho-1D-myo-inositol 1,2,3,4,6-pentakisphosphate + ATP + H(+) = 1,5-bis(diphospho)-1D-myo-inositol 2,3,4,6-tetrakisphosphate + ADP. Its function is as follows. Bifunctional inositol kinase that acts in concert with the IP6K kinases IP6K1, IP6K2 and IP6K3 to synthesize the diphosphate group-containing inositol pyrophosphates diphosphoinositol pentakisphosphate, PP-InsP5, and bis-diphosphoinositol tetrakisphosphate, (PP)2-InsP4. PP-InsP5 and (PP)2-InsP4, also respectively called InsP7 and InsP8, regulate a variety of cellular processes, including apoptosis, vesicle trafficking, cytoskeletal dynamics, exocytosis, insulin signaling and neutrophil activation. Phosphorylates inositol hexakisphosphate (InsP6) at position 1 to produce PP-InsP5 which is in turn phosphorylated by IP6Ks to produce (PP)2-InsP4. Alternatively, phosphorylates PP-InsP5 at position 1, produced by IP6Ks from InsP6, to produce (PP)2-InsP4. Activated when cells are exposed to hyperosmotic stress. In Mus musculus (Mouse), this protein is Inositol hexakisphosphate and diphosphoinositol-pentakisphosphate kinase 1.